The following is a 189-amino-acid chain: Large ribosomal subunit protein bL9 (189 aa).

This sequence belongs to the bacterial ribosomal protein bL9 family.

Its function is as follows. Binds to the 23S rRNA. The polypeptide is Large ribosomal subunit protein bL9 (Cereibacter sphaeroides (strain ATCC 17023 / DSM 158 / JCM 6121 / CCUG 31486 / LMG 2827 / NBRC 12203 / NCIMB 8253 / ATH 2.4.1.) (Rhodobacter sphaeroides)).